The following is a 151-amino-acid chain: 3-hydroxyacyl-[acyl-carrier-protein] dehydratase FabZ (151 aa).

Residue H49 is part of the active site.

This sequence belongs to the thioester dehydratase family. FabZ subfamily.

It localises to the cytoplasm. The catalysed reaction is a (3R)-hydroxyacyl-[ACP] = a (2E)-enoyl-[ACP] + H2O. In terms of biological role, involved in unsaturated fatty acids biosynthesis. Catalyzes the dehydration of short chain beta-hydroxyacyl-ACPs and long chain saturated and unsaturated beta-hydroxyacyl-ACPs. This is 3-hydroxyacyl-[acyl-carrier-protein] dehydratase FabZ from Wolinella succinogenes (strain ATCC 29543 / DSM 1740 / CCUG 13145 / JCM 31913 / LMG 7466 / NCTC 11488 / FDC 602W) (Vibrio succinogenes).